Here is a 339-residue protein sequence, read N- to C-terminus: Phosphate acyltransferase (339 aa).

The protein belongs to the PlsX family. Homodimer. Probably interacts with PlsY.

The protein resides in the cytoplasm. It catalyses the reaction a fatty acyl-[ACP] + phosphate = an acyl phosphate + holo-[ACP]. The protein operates within lipid metabolism; phospholipid metabolism. Its function is as follows. Catalyzes the reversible formation of acyl-phosphate (acyl-PO(4)) from acyl-[acyl-carrier-protein] (acyl-ACP). This enzyme utilizes acyl-ACP as fatty acyl donor, but not acyl-CoA. This Helicobacter pylori (strain J99 / ATCC 700824) (Campylobacter pylori J99) protein is Phosphate acyltransferase.